Here is a 170-residue protein sequence, read N- to C-terminus: Inosine/xanthosine triphosphatase (170 aa).

This sequence belongs to the YjjX NTPase family. In terms of assembly, homodimer. Requires Mg(2+) as cofactor. The cofactor is Mn(2+).

It catalyses the reaction XTP + H2O = XDP + phosphate + H(+). The catalysed reaction is ITP + H2O = IDP + phosphate + H(+). Functionally, phosphatase that hydrolyzes non-canonical purine nucleotides such as XTP and ITP to their respective diphosphate derivatives. Probably excludes non-canonical purines from DNA/RNA precursor pool, thus preventing their incorporation into DNA/RNA and avoiding chromosomal lesions. This is Inosine/xanthosine triphosphatase from Aliivibrio fischeri (strain ATCC 700601 / ES114) (Vibrio fischeri).